A 942-amino-acid chain; its full sequence is Chitin synthase 2 (942 aa).

Positions Met1–Gln13 are enriched in basic and acidic residues. A disordered region spans residues Met1–Asp132. Positions Tyr18–Pro33 are enriched in low complexity. An N-linked (GlcNAc...) asparagine glycan is attached at Asn23. Polar residues predominate over residues Pro71–Ser80. Asn587 is a glycosylation site (N-linked (GlcNAc...) asparagine). 4 consecutive transmembrane segments (helical) span residues Ile590 to Ile610, Phe625 to Ile645, Ile663 to Leu683, and Phe696 to Val716. An N-linked (GlcNAc...) asparagine glycan is attached at Asn736. 2 consecutive transmembrane segments (helical) span residues Phe739–Leu759 and Phe770–Cys790. Asn803 is a glycosylation site (N-linked (GlcNAc...) asparagine). 2 consecutive transmembrane segments (helical) span residues Val873 to Phe893 and Ile916 to Ile936.

This sequence belongs to the chitin synthase family. Class III subfamily.

Its subcellular location is the cell membrane. It carries out the reaction [(1-&gt;4)-N-acetyl-beta-D-glucosaminyl](n) + UDP-N-acetyl-alpha-D-glucosamine = [(1-&gt;4)-N-acetyl-beta-D-glucosaminyl](n+1) + UDP + H(+). Its function is as follows. Polymerizes chitin, a structural polymer of the cell wall and septum, by transferring the sugar moiety of UDP-GlcNAc to the non-reducing end of the growing chitin polymer. The polypeptide is Chitin synthase 2 (Cryptococcus neoformans var. grubii serotype A (strain H99 / ATCC 208821 / CBS 10515 / FGSC 9487) (Filobasidiella neoformans var. grubii)).